A 720-amino-acid polypeptide reads, in one-letter code: uncharacterized protein (720 aa).

Glycine 2 is lipidated: N-myristoyl glycine; by host.

This is an uncharacterized protein from Cryphonectria parasitica mycoreovirus 1 (strain 9B21) (CpMYRV-1).